A 108-amino-acid polypeptide reads, in one-letter code: UPF0145 protein LJ_1287 (108 aa).

Belongs to the UPF0145 family.

The sequence is that of UPF0145 protein LJ_1287 from Lactobacillus johnsonii (strain CNCM I-12250 / La1 / NCC 533).